The primary structure comprises 296 residues: MGLSHSKTHLRVIKVAPLQNKEVETPSAGRVDFAFNQNLEEKTSYSLARLQDQNKALEGQLPPLQENWYGRYSTASRDMYFDIPLEHRETSIIKRHPPQRLQKLEPIDLPRVITSGRLLSQREARTMHKAKQVLEKKMQTPMYTSENRQYLHKMQVLEMIRKRQEAQMELKKSLHGEARINKQSPRDHKAKKTLQSTPRNDDHDLLTMLPDEILNRGPGNSKNTEFLKHQAVNNYCPWKIGKMETWLHEQEAQGQLLWDSSSSDSDEQGKDEKKPRALVRTRTERIPLFDEFFDQE.

G2 is lipidated: N-myristoyl glycine. 2 stretches are compositionally biased toward basic and acidic residues: residues 173–187 and 267–281; these read SLHG…SPRD and EQGK…LVRT. Disordered stretches follow at residues 173–204 and 256–281; these read SLHG…DDHD and LLWD…LVRT.

The protein resides in the cell membrane. The protein localises to the cytoplasmic vesicle. In terms of biological role, may be involved in tuning the metabolism, energy expenditure, and excretion processes. The polypeptide is Factor associated with metabolism and energy (Homo sapiens (Human)).